The following is a 968-amino-acid chain: MTQGKQPDGVARTSYKDTLNLLQTSFGMRANASQREPELQEFWKQQGIDLELGLNNQGQNFTLHDGPPYANGALHMGHALNKVLKDIINKHQILRGRQVRFVPGWDCHGLPIELKVLQNLNQEQREALTPLKLRKKAAAFARKQVDSQMAGFRRWGIWADWEHPYLTLQKEYEAAQIQVFGKMFQKGYIYRGLKPVHWSPSSRTALAEAELEYPDGHTSPSVYVAFPAAKLPEKLRTSLGNQGLELPNNGLELGQALQIAIWTTTPWTLPANLAVSVNEKLDYSFAVDNQGRLLLVAAELLPSLRDTLALELTARATVKGALLAGLIYKHPLLDRDSPIVIGGEYITTESGTGLVHTAPGHGVDDFNTGQKHDLGMLCPVDESGTMTSEAGPFAGLNVLKDANPTIIAALEERGALLKHEPYAHRYPYDWRTKKPTIFRATEQWFASVEGFRNEALTAINSVEWLPASGRNRMEAMVRERGDWCISRQRTWGVPIPVFYEREGNEVLLNDETLAHVKALITEHGADVWWERNEVELLPPAYAAEAERWRKGTDTMDVWFDSGSSWAAVASQQEGLAYPTELYLEGSDQHRGWFQSSLLTSVAINSQAPYRQVLTHGFALDEKGRKMSKSLGNVVDPAVIIDGGKNQKQEPPYGADVLRLWVSSVDYSADVPIGASILRQIADVYRKVRNTSRYLLGNLHDFDPERDAIPVPELPLLDRWMLQRTAEVMDEISTAFDRYEFYRFFQLLQSYCVVDLSNFYLDIAKDRLYVSSPSERRRRSCQTAMALIIERLAGAISPVLCHMAEDIWQNLPYSVAEDSVFRRGWPTVPETWRDPSMMAPMHQLRELRSAVNRVLEDCRSQGELGAALEAAVRLEAHSEALQEALDWLRQQGDPDVDGLRDWLLVSHLQVGGEPWAELLASQDNALATIEVARARGSKCERCWHYETDVGQHTTHPTLCGRCVGVLEHQ.

Positions 68-78 (PYANGALHMGH) match the 'HIGH' region motif. Glu-584 contacts L-isoleucyl-5'-AMP. The 'KMSKS' region signature appears at 625-629 (KMSKS). Lys-628 is a binding site for ATP. Cys-938, Cys-941, Cys-958, and Cys-961 together coordinate Zn(2+).

The protein belongs to the class-I aminoacyl-tRNA synthetase family. IleS type 1 subfamily. Monomer. Zn(2+) is required as a cofactor.

The protein resides in the cytoplasm. It carries out the reaction tRNA(Ile) + L-isoleucine + ATP = L-isoleucyl-tRNA(Ile) + AMP + diphosphate. In terms of biological role, catalyzes the attachment of isoleucine to tRNA(Ile). As IleRS can inadvertently accommodate and process structurally similar amino acids such as valine, to avoid such errors it has two additional distinct tRNA(Ile)-dependent editing activities. One activity is designated as 'pretransfer' editing and involves the hydrolysis of activated Val-AMP. The other activity is designated 'posttransfer' editing and involves deacylation of mischarged Val-tRNA(Ile). The sequence is that of Isoleucine--tRNA ligase from Prochlorococcus marinus (strain MIT 9313).